The chain runs to 363 residues: Ribosomal RNA large subunit methyltransferase M (363 aa).

S-adenosyl-L-methionine-binding positions include serine 194, 227–230 (CPGG), aspartate 246, aspartate 266, and aspartate 284. Lysine 313 serves as the catalytic Proton acceptor.

This sequence belongs to the class I-like SAM-binding methyltransferase superfamily. RNA methyltransferase RlmE family. RlmM subfamily. As to quaternary structure, monomer.

It localises to the cytoplasm. It catalyses the reaction cytidine(2498) in 23S rRNA + S-adenosyl-L-methionine = 2'-O-methylcytidine(2498) in 23S rRNA + S-adenosyl-L-homocysteine + H(+). Functionally, catalyzes the 2'-O-methylation at nucleotide C2498 in 23S rRNA. The sequence is that of Ribosomal RNA large subunit methyltransferase M from Haemophilus influenzae (strain PittEE).